Consider the following 740-residue polypeptide: Probable type IV piliation system protein DR_0774 (740 aa).

The first 20 residues, 1-20, serve as a signal peptide directing secretion; that stretch reads MNKRHALLLTAVLGMATAYA.

This sequence belongs to the bacterial secretin family.

The protein localises to the cell envelope. Could be part of the type IV piliation system (T4P). May contribute at the cohesion between the S-layer and the outer membrane by forming oligomers. Could also be the main channel through which trafficking is managed. This is Probable type IV piliation system protein DR_0774 from Deinococcus radiodurans (strain ATCC 13939 / DSM 20539 / JCM 16871 / CCUG 27074 / LMG 4051 / NBRC 15346 / NCIMB 9279 / VKM B-1422 / R1).